Consider the following 314-residue polypeptide: Solute carrier family 25 member 44 (314 aa).

Solcar repeat units follow at residues 18-100, 107-210, and 220-302; these read KKFY…TRKF, SNTV…YAEQ, and PHIV…LKKL. A run of 6 helical transmembrane segments spans residues 20–42, 71–90, 113–133, 185–201, 222–239, and 278–296; these read FYVF…TLIR, AGLY…GQCY, LVAG…IDVV, GYVA…AVWW, IVFQ…ASIL, and LSAR…VVGY.

This sequence belongs to the mitochondrial carrier (TC 2.A.29) family. As to expression, highly expressed in brown adipose tissues compared with other metabolic organs.

The protein resides in the mitochondrion membrane. The enzyme catalyses L-valine(in) = L-valine(out). It catalyses the reaction L-leucine(in) = L-leucine(out). Mitochondrial solute transporter which transports branched-chain amino acid (BCAA; valine, leucine and isoleucine) into mitochondria in brown adipose tissue (BAT). BAT is involved in BCAA catabolism and actively utilizes BCAA in the mitochondria for thermogenesis. The polypeptide is Solute carrier family 25 member 44 (Mus musculus (Mouse)).